The primary structure comprises 693 residues: Polyribonucleotide nucleotidyltransferase (693 aa).

Positions 490 and 496 each coordinate Mg(2+). Residues P557 to I617 form the KH domain. The 65-residue stretch at G627–L691 folds into the S1 motif domain.

It belongs to the polyribonucleotide nucleotidyltransferase family. Requires Mg(2+) as cofactor.

It is found in the cytoplasm. It catalyses the reaction RNA(n+1) + phosphate = RNA(n) + a ribonucleoside 5'-diphosphate. Functionally, involved in mRNA degradation. Catalyzes the phosphorolysis of single-stranded polyribonucleotides processively in the 3'- to 5'-direction. In Fervidobacterium nodosum (strain ATCC 35602 / DSM 5306 / Rt17-B1), this protein is Polyribonucleotide nucleotidyltransferase.